The primary structure comprises 273 residues: Kit ligand (273 aa).

Residues 1–25 (MKKTQTWIITCIYLQLLLFNPLVKT) form the signal peptide. At Q26 the chain carries Pyrrolidone carboxylic acid. At 26–214 (QEICRNPVTD…AKSPEDPGLQ (189 aa)) the chain is on the extracellular side. Cystine bridges form between C29-C114 and C68-C163. N90 is a glycosylation site (N-linked (GlcNAc...) asparagine; partial). N-linked (GlcNAc...) asparagine glycosylation is present at N145. S167 is a glycosylation site (O-linked (GalNAc...) serine). Residues T168 and T180 are each glycosylated (O-linked (GalNAc...) threonine). The segment at 190 to 211 (ASSLRNDSSSSNRKAAKSPEDP) is disordered. Low complexity predominate over residues 191-202 (SSLRNDSSSSNR). An N-linked (GlcNAc...) asparagine glycan is attached at N195. A helical membrane pass occupies residues 215–237 (WTAMALPALISLVIGFAFGALYW). The Cytoplasmic portion of the chain corresponds to 238–273 (KKKQSSLTRAVENIQINEEDNEISMLQQKEREFQEV).

The protein belongs to the SCF family. In terms of assembly, homodimer, non-covalently linked. Heterotetramer with KIT, binding two KIT molecules; thereby mediates KIT dimerization and subsequent activation by autophosphorylation. In terms of processing, a soluble form is produced by proteolytic processing of isoform 1 in the extracellular domain. The identity of N- and O-linked saccharides is not reported in PubMed:1708771. The O-linked polysaccharides are probably the mucin type linked to GalNAc.

The protein resides in the cell membrane. It is found in the cytoplasm. It localises to the cytoskeleton. Its subcellular location is the cell projection. The protein localises to the lamellipodium. The protein resides in the filopodium. It is found in the secreted. Functionally, ligand for the receptor-type protein-tyrosine kinase KIT. Plays an essential role in the regulation of cell survival and proliferation, hematopoiesis, stem cell maintenance, gametogenesis, mast cell development, migration and function, and in melanogenesis. KITLG/SCF binding can activate several signaling pathways. Promotes phosphorylation of PIK3R1, the regulatory subunit of phosphatidylinositol 3-kinase, and subsequent activation of the kinase AKT1. KITLG/SCF and KIT also transmit signals via GRB2 and activation of RAS, RAF1 and the MAP kinases MAPK1/ERK2 and/or MAPK3/ERK1. KITLG/SCF and KIT promote activation of STAT family members STAT1, STAT3 and STAT5. KITLG/SCF and KIT promote activation of PLCG1, leading to the production of the cellular signaling molecules diacylglycerol and inositol 1,4,5-trisphosphate. KITLG/SCF acts synergistically with other cytokines, probably interleukins. In Rattus norvegicus (Rat), this protein is Kit ligand (Kitlg).